The sequence spans 940 residues: Valine--tRNA ligase (940 aa).

The short motif at 47–57 is the 'HIGH' region element; the sequence is PNVTGILHMGH. Residues 564–568 carry the 'KMSKS' region motif; sequence KLSKS. Residue lysine 567 coordinates ATP. A coiled-coil region spans residues 872–938; it reads PMEHITKERN…LQSILDKLAS (67 aa).

Belongs to the class-I aminoacyl-tRNA synthetase family. ValS type 1 subfamily. In terms of assembly, monomer.

The protein resides in the cytoplasm. It catalyses the reaction tRNA(Val) + L-valine + ATP = L-valyl-tRNA(Val) + AMP + diphosphate. In terms of biological role, catalyzes the attachment of valine to tRNA(Val). As ValRS can inadvertently accommodate and process structurally similar amino acids such as threonine, to avoid such errors, it has a 'posttransfer' editing activity that hydrolyzes mischarged Thr-tRNA(Val) in a tRNA-dependent manner. This is Valine--tRNA ligase from Chlamydia caviae (strain ATCC VR-813 / DSM 19441 / 03DC25 / GPIC) (Chlamydophila caviae).